The primary structure comprises 496 residues: Apulose kinase (496 aa).

ATP-binding positions include 13–15 (TTN), Thr-267, Gly-308, and 408–412 (GATQN).

It belongs to the FGGY kinase family.

It catalyses the reaction apulose + ATP = apulose 4-phosphate + ADP + H(+). It functions in the pathway carbohydrate metabolism. Involved in catabolism of D-apiose. Catalyzes phosphorylation of apulose to form apulose 4-phosphate. In Pectobacterium atrosepticum (strain SCRI 1043 / ATCC BAA-672) (Erwinia carotovora subsp. atroseptica), this protein is Apulose kinase.